Consider the following 305-residue polypeptide: Membrane glycoprotein UL142 (305 aa).

Positions 1-19 (MRIEWACWLFGYFVSSVGS) are cleaved as a signal peptide. Residues 20–270 (ERSLSYRYHL…QKTNNTTSPW (251 aa)) lie on the Lumenal side of the membrane. A helical membrane pass occupies residues 271–288 (VYAIPMGATATIGAGLYI). At 289 to 305 (GKHFTPVKFVYEVWRGQ) the chain is on the cytoplasmic side.

Interacts with host MICA and ULBP3.

The protein localises to the host endoplasmic reticulum membrane. It is found in the host Golgi apparatus membrane. In terms of biological role, participates in the inhibition of the host immune response. Prevents host NK cell-mediated lysis of the infected cell by preventing the KLRK1 ligand 3/ULBP3 trafficking to the cell surface. Also retains another KLRK1 ligand, MHC class I-related chain A/MICA, in the Golgi apparatus to avoid its surface expression. In Homo sapiens (Human), this protein is Membrane glycoprotein UL142 (UL142).